A 386-amino-acid chain; its full sequence is 8-amino-7-oxononanoate synthase (386 aa).

Residue Arg-19 participates in substrate binding. 106–107 (GY) contributes to the pyridoxal 5'-phosphate binding site. His-131 is a binding site for substrate. 3 residues coordinate pyridoxal 5'-phosphate: Ser-177, His-205, and Thr-233. The residue at position 236 (Lys-236) is an N6-(pyridoxal phosphate)lysine. A substrate-binding site is contributed by Thr-350.

It belongs to the class-II pyridoxal-phosphate-dependent aminotransferase family. BioF subfamily. Homodimer. Pyridoxal 5'-phosphate is required as a cofactor.

It catalyses the reaction 6-carboxyhexanoyl-[ACP] + L-alanine + H(+) = (8S)-8-amino-7-oxononanoate + holo-[ACP] + CO2. The protein operates within cofactor biosynthesis; biotin biosynthesis. Functionally, catalyzes the decarboxylative condensation of pimeloyl-[acyl-carrier protein] and L-alanine to produce 8-amino-7-oxononanoate (AON), [acyl-carrier protein], and carbon dioxide. This Alcanivorax borkumensis (strain ATCC 700651 / DSM 11573 / NCIMB 13689 / SK2) protein is 8-amino-7-oxononanoate synthase.